We begin with the raw amino-acid sequence, 209 residues long: Orotate phosphoribosyltransferase (209 aa).

5-phospho-alpha-D-ribose 1-diphosphate is bound by residues R96, K100, H102, and 122–130 (EDLISTGGS). Residue S126 coordinates orotate.

Belongs to the purine/pyrimidine phosphoribosyltransferase family. PyrE subfamily. In terms of assembly, homodimer. Requires Mg(2+) as cofactor.

It catalyses the reaction orotidine 5'-phosphate + diphosphate = orotate + 5-phospho-alpha-D-ribose 1-diphosphate. It functions in the pathway pyrimidine metabolism; UMP biosynthesis via de novo pathway; UMP from orotate: step 1/2. Functionally, catalyzes the transfer of a ribosyl phosphate group from 5-phosphoribose 1-diphosphate to orotate, leading to the formation of orotidine monophosphate (OMP). The protein is Orotate phosphoribosyltransferase of Streptococcus thermophilus (strain CNRZ 1066).